The chain runs to 156 residues: Small ribosomal subunit protein uS7 (156 aa).

This sequence belongs to the universal ribosomal protein uS7 family. Part of the 30S ribosomal subunit. Contacts proteins S9 and S11.

One of the primary rRNA binding proteins, it binds directly to 16S rRNA where it nucleates assembly of the head domain of the 30S subunit. Is located at the subunit interface close to the decoding center, probably blocks exit of the E-site tRNA. In Synechococcus sp. (strain JA-3-3Ab) (Cyanobacteria bacterium Yellowstone A-Prime), this protein is Small ribosomal subunit protein uS7.